A 508-amino-acid polypeptide reads, in one-letter code: Flagellin (508 aa).

Belongs to the bacterial flagellin family.

It is found in the secreted. Its subcellular location is the bacterial flagellum. Flagellin is the subunit protein which polymerizes to form the filaments of bacterial flagella. This chain is Flagellin (fliC), found in Salmonella berta.